Consider the following 296-residue polypeptide: Immediate early response gene 5-like protein (296 aa).

It belongs to the IER family.

The chain is Immediate early response gene 5-like protein (ier5l) from Xenopus tropicalis (Western clawed frog).